A 2216-amino-acid polypeptide reads, in one-letter code: RNA-directed RNA polymerase L (2216 aa).

The interval 26–289 (KTSFLSQVNL…ETRTAMLDER (264 aa)) is endonuclease. Residues glutamate 51, aspartate 88, and glutamate 101 each coordinate Mn(2+). The active site involves lysine 114. Residues 1167–1364 (LDMKCVVRLS…YLSSKFNKFV (198 aa)) form the RdRp catalytic domain. Residue aspartate 1323 participates in Mg(2+) binding.

Belongs to the Bunyavirales RNA polymerase family. Homomultimer; the oligomeric structure is essential for the polymerase activity. Interacts with nucleoprotein N. Interacts with protein Z; this interaction inhibits viral transcription and replication, Z partially blocks the product exit tunnel for the releasing nascent RNA product. It depends on Mn(2+) as a cofactor. The cofactor is Mg(2+).

The protein localises to the virion. Its subcellular location is the host cytoplasm. It carries out the reaction RNA(n) + a ribonucleoside 5'-triphosphate = RNA(n+1) + diphosphate. Functionally, RNA-dependent RNA polymerase, which is responsible for the replication and transcription of the viral RNA genome using antigenomic RNA as an intermediate. During transcription, synthesizes subgenomic RNAs and assures their capping by a cap-snatching mechanism, which involves the endonuclease activity cleaving the host capped pre-mRNAs. These short capped RNAs are then used as primers for viral transcription. The 3'-end of subgenomic mRNAs molecules are heterogeneous and not polyadenylated. The replicase function is to direct synthesis of antigenomic and genomic RNA which are encapsidated and non capped. As a consequence of the use of the same enzyme for both transcription and replication, these mechanisms need to be well coordinated. These processes may be regulated by proteins N and Z in a dose-dependent manner. Z protein inhibits the viral polymerase L und thus the viral transcription and RNA synthesis. In Bear Canyon mammarenavirus (isolate Mouse/United States/AV A0070039/2000) (BCNV), this protein is RNA-directed RNA polymerase L.